We begin with the raw amino-acid sequence, 75 residues long: Ribonuclease pancreatic (75 aa).

Disulfide bonds link C7-C65 and C46-C53. N15 carries N-linked (GlcNAc...) asparagine glycosylation. Residues 22-26, K47, and R66 each bind substrate; that span reads KPVNT.

The protein belongs to the pancreatic ribonuclease family. In terms of assembly, monomer. Interacts with and forms tight 1:1 complexes with RNH1. Dimerization of two such complexes may occur. Interaction with RNH1 inhibits this protein. As to expression, pancreas.

It localises to the secreted. It catalyses the reaction an [RNA] containing cytidine + H2O = an [RNA]-3'-cytidine-3'-phosphate + a 5'-hydroxy-ribonucleotide-3'-[RNA].. It carries out the reaction an [RNA] containing uridine + H2O = an [RNA]-3'-uridine-3'-phosphate + a 5'-hydroxy-ribonucleotide-3'-[RNA].. Functionally, endonuclease that catalyzes the cleavage of RNA on the 3' side of pyrimidine nucleotides. Acts on single-stranded and double-stranded RNA. The protein is Ribonuclease pancreatic (rnase1) of Oryx leucoryx (Arabian oryx).